The chain runs to 457 residues: Bifunctional protein GlmU (457 aa).

The tract at residues 1-230 (MSKRYAVVLA…FEESLGVNDR (230 aa)) is pyrophosphorylase. UDP-N-acetyl-alpha-D-glucosamine contacts are provided by residues 9–12 (LAAG), K23, Q73, and 78–79 (GT). Residue D103 participates in Mg(2+) binding. 4 residues coordinate UDP-N-acetyl-alpha-D-glucosamine: G140, E155, N170, and N228. A Mg(2+)-binding site is contributed by N228. Positions 231 to 251 (IALAEASRLMQRRINENHMRN) are linker. The segment at 252–457 (GVTLVNPENT…GYAKHLNHGK (206 aa)) is N-acetyltransferase. The UDP-N-acetyl-alpha-D-glucosamine site is built by R333 and K351. H363 acts as the Proton acceptor in catalysis. Y366 and N377 together coordinate UDP-N-acetyl-alpha-D-glucosamine. Residues 386–387 (NY), A423, and R440 contribute to the acetyl-CoA site.

The protein in the N-terminal section; belongs to the N-acetylglucosamine-1-phosphate uridyltransferase family. It in the C-terminal section; belongs to the transferase hexapeptide repeat family. In terms of assembly, homotrimer. Mg(2+) serves as cofactor.

Its subcellular location is the cytoplasm. It catalyses the reaction alpha-D-glucosamine 1-phosphate + acetyl-CoA = N-acetyl-alpha-D-glucosamine 1-phosphate + CoA + H(+). The catalysed reaction is N-acetyl-alpha-D-glucosamine 1-phosphate + UTP + H(+) = UDP-N-acetyl-alpha-D-glucosamine + diphosphate. It functions in the pathway nucleotide-sugar biosynthesis; UDP-N-acetyl-alpha-D-glucosamine biosynthesis; N-acetyl-alpha-D-glucosamine 1-phosphate from alpha-D-glucosamine 6-phosphate (route II): step 2/2. It participates in nucleotide-sugar biosynthesis; UDP-N-acetyl-alpha-D-glucosamine biosynthesis; UDP-N-acetyl-alpha-D-glucosamine from N-acetyl-alpha-D-glucosamine 1-phosphate: step 1/1. Its pathway is bacterial outer membrane biogenesis; LPS lipid A biosynthesis. In terms of biological role, catalyzes the last two sequential reactions in the de novo biosynthetic pathway for UDP-N-acetylglucosamine (UDP-GlcNAc). The C-terminal domain catalyzes the transfer of acetyl group from acetyl coenzyme A to glucosamine-1-phosphate (GlcN-1-P) to produce N-acetylglucosamine-1-phosphate (GlcNAc-1-P), which is converted into UDP-GlcNAc by the transfer of uridine 5-monophosphate (from uridine 5-triphosphate), a reaction catalyzed by the N-terminal domain. This is Bifunctional protein GlmU from Listeria monocytogenes serotype 4b (strain F2365).